The following is a 360-amino-acid chain: Mannose-1-phosphate guanylyltransferase catalytic subunit beta (360 aa).

The interval 2 to 222 (KALILVGGYG…QGFWMDIGQP (221 aa)) is substrate-binding domain. Asp-110 is a GDP-alpha-D-mannose binding site. Asp-110 is a Mg(2+) binding site. The active site involves Lys-162. Asp-218 is a GDP-alpha-D-mannose binding site. Residues 245–360 (YSGPGIVGNV…ESVPEPRIIM (116 aa)) form a hexapeptide repeat domain region.

It belongs to the transferase hexapeptide repeat family. As to quaternary structure, component of the GMPPA-GMPPB mannose-1-phosphate guanylyltransferase complex composed of 4 GMPPA subunits and 8 GMPPB subunits; the complex is organized into three layers, a central layer made up of 2 GMPPA dimers sandwiched between two layers each made up of 2 GMPPB dimers. GMPPB catalytic activity is reduced when part of the complex and binding of GDP-alpha-D-Mannose by GMPPA induces allosteric feedback inhibition of GMPPB. Mg(2+) is required as a cofactor.

The protein localises to the cytoplasm. It catalyses the reaction alpha-D-mannose 1-phosphate + GTP + H(+) = GDP-alpha-D-mannose + diphosphate. It functions in the pathway nucleotide-sugar biosynthesis; GDP-alpha-D-mannose biosynthesis; GDP-alpha-D-mannose from alpha-D-mannose 1-phosphate (GTP route): step 1/1. With respect to regulation, enzyme activity is reduced by incorporation into the GMPPA-GMPPB mannose-1-phosphate guanylyltransferase complex. Allosterically inhibited, when part of the GMPPA-GMPPB complex, by GDP-alpha-D-mannose binding to GMPPA. In terms of biological role, catalytic subunit of the GMPPA-GMPPB mannose-1-phosphate guanylyltransferase complex. Catalyzes the formation of GDP-mannose, an essential precursor of glycan moieties of glycoproteins and glycolipids. Can catalyze the reverse reaction in vitro. Together with GMPPA regulates GDP-alpha-D-mannose levels. The chain is Mannose-1-phosphate guanylyltransferase catalytic subunit beta from Mus musculus (Mouse).